Consider the following 383-residue polypeptide: Lipid-A-disaccharide synthase (383 aa).

Belongs to the LpxB family.

The enzyme catalyses a lipid X + a UDP-2-N,3-O-bis[(3R)-3-hydroxyacyl]-alpha-D-glucosamine = a lipid A disaccharide + UDP + H(+). Its pathway is bacterial outer membrane biogenesis; LPS lipid A biosynthesis. Functionally, condensation of UDP-2,3-diacylglucosamine and 2,3-diacylglucosamine-1-phosphate to form lipid A disaccharide, a precursor of lipid A, a phosphorylated glycolipid that anchors the lipopolysaccharide to the outer membrane of the cell. The sequence is that of Lipid-A-disaccharide synthase from Anaeromyxobacter dehalogenans (strain 2CP-C).